The primary structure comprises 87 residues: Large ribosomal subunit protein bL27 (87 aa).

This sequence belongs to the bacterial ribosomal protein bL27 family.

The polypeptide is Large ribosomal subunit protein bL27 (Stenotrophomonas maltophilia (strain K279a)).